The following is a 340-amino-acid chain: Dihydroorotate dehydrogenase (quinone) (340 aa).

Residues 63–67 (AGLDK) and Thr-87 each bind FMN. Lys-67 contributes to the substrate binding site. Residue 112-116 (NRMGF) coordinates substrate. FMN-binding residues include Asn-140 and Asn-173. Asn-173 contacts substrate. The active-site Nucleophile is the Ser-176. Asn-178 provides a ligand contact to substrate. The FMN site is built by Lys-218 and Thr-246. Residue 247-248 (NT) participates in substrate binding. Residues Gly-269, Gly-298, and 319–320 (YT) contribute to the FMN site.

It belongs to the dihydroorotate dehydrogenase family. Type 2 subfamily. As to quaternary structure, monomer. It depends on FMN as a cofactor.

It is found in the cell membrane. The catalysed reaction is (S)-dihydroorotate + a quinone = orotate + a quinol. Its pathway is pyrimidine metabolism; UMP biosynthesis via de novo pathway; orotate from (S)-dihydroorotate (quinone route): step 1/1. In terms of biological role, catalyzes the conversion of dihydroorotate to orotate with quinone as electron acceptor. This is Dihydroorotate dehydrogenase (quinone) from Methylococcus capsulatus (strain ATCC 33009 / NCIMB 11132 / Bath).